Consider the following 308-residue polypeptide: Putative lipid kinase SH2167 (308 aa).

One can recognise a DAGKc domain in the interval 1-139 (MGQKFNHGVL…YDVMKVNGTY (139 aa)). Residues S44, 74-80 (GDGTVNE), and T101 each bind ATP. Mg(2+) contacts are provided by S220, D223, and K225. Catalysis depends on E281, which acts as the Proton acceptor.

It belongs to the diacylglycerol/lipid kinase family. Requires Mg(2+) as cofactor.

Functionally, may catalyze the ATP-dependent phosphorylation of lipids other than diacylglycerol (DAG). In Staphylococcus haemolyticus (strain JCSC1435), this protein is Putative lipid kinase SH2167.